Here is a 347-residue protein sequence, read N- to C-terminus: Toluene-4-sulfonate monooxygenase system iron-sulfur subunit TsaM1 (347 aa).

The region spanning 7-109 (WYVAAWDTEI…VVERNRLVWI (103 aa)) is the Rieske domain. [2Fe-2S] cluster-binding residues include cysteine 48, histidine 50, cysteine 67, and histidine 70.

In terms of assembly, homotetramer. Part of the p-toluenesulfonate methyl-monooxygenase complex TsaBM, comprising the reductase TsaB and the oxygenase TsaM. It depends on [2Fe-2S] cluster as a cofactor.

It catalyses the reaction toluene-4-sulfonate + NADH + O2 + H(+) = 4-(hydroxymethyl)benzenesulfonate + NAD(+) + H2O. In terms of biological role, involved in the toluene-4-sulfonate degradation pathway. Does not discriminate between the sulfonate and the carboxyl substituents and can also be involved in the p-toluenecarboxylate degradation pathway. Can use toluene-4-sulfonate, p-toluate, m-toluate and 4-ethylbenzoate as substrates, but not p-xylene, toluene and p-cresol. Also catalyzes the demethylation of 4-methoxybenzoate to 4-hydroxybenzoate. This is Toluene-4-sulfonate monooxygenase system iron-sulfur subunit TsaM1 (tsaM1) from Comamonas testosteroni (Pseudomonas testosteroni).